The chain runs to 463 residues: Probable diacyglycerol O-acyltransferase tgs1 (463 aa).

The Proton acceptor role is filled by histidine 137.

This sequence belongs to the long-chain O-acyltransferase family.

The catalysed reaction is an acyl-CoA + a 1,2-diacyl-sn-glycerol = a triacyl-sn-glycerol + CoA. The protein operates within glycerolipid metabolism; triacylglycerol biosynthesis. Its function is as follows. Catalyzes the terminal and only committed step in triacylglycerol synthesis by using diacylglycerol and fatty acyl CoA as substrates. Required for storage lipid synthesis. This is Probable diacyglycerol O-acyltransferase tgs1 (tgs1) from Mycobacterium tuberculosis (strain CDC 1551 / Oshkosh).